Consider the following 367-residue polypeptide: Ferrochelatase (367 aa).

The Fe cation site is built by H226 and E307.

The protein belongs to the ferrochelatase family.

The protein resides in the cytoplasm. It catalyses the reaction heme b + 2 H(+) = protoporphyrin IX + Fe(2+). The protein operates within porphyrin-containing compound metabolism; protoheme biosynthesis; protoheme from protoporphyrin-IX: step 1/1. Catalyzes the ferrous insertion into protoporphyrin IX. The sequence is that of Ferrochelatase from Burkholderia mallei (strain NCTC 10247).